Here is a 39-residue protein sequence, read N- to C-terminus: MTRTAVLLLTLLFLVAMAASDKIKTRELCWSERECENGK.

Positions 1-20 are cleaved as a signal peptide; sequence MTRTAVLLLTLLFLVAMAAS. A disulfide bridge connects residues Cys29 and Cys35.

In terms of tissue distribution, expressed by the venom duct.

The protein localises to the secreted. Functionally, probable neurotoxin. This Californiconus californicus (California cone) protein is Contryphan-Cal3.